The chain runs to 211 residues: Small ribosomal subunit protein uS3 (211 aa).

Positions 38–106 (LRKFIKKAFY…NIELNIIEVK (69 aa)) constitute a KH type-2 domain.

The protein belongs to the universal ribosomal protein uS3 family. In terms of assembly, part of the 30S ribosomal subunit. Forms a tight complex with proteins S10 and S14.

Functionally, binds the lower part of the 30S subunit head. Binds mRNA in the 70S ribosome, positioning it for translation. This Ehrlichia ruminantium (strain Gardel) protein is Small ribosomal subunit protein uS3.